The chain runs to 2178 residues: Genome polyprotein (2178 aa).

The interval 1–20 (MGAQVSTQKSGSHENQNILT) is disordered. G2 carries N-myristoyl glycine; by host lipidation. Residues 2–1490 (GAQVSTQKSG…AVNQASMIIN (1489 aa)) are Cytoplasmic-facing. Positions 564-584 (ALTEGLSDELEEVIVEKTKQT) are amphipathic alpha-helix. Catalysis depends on for protease 2A activity residues H875 and D893. 2 residues coordinate Zn(2+): C910 and C912. The active-site For protease 2A activity is C964. C970 and H972 together coordinate Zn(2+). The membrane-binding stretch occupies residues 1100 to 1172 (NDGWFRKFND…HDSNPTQEKR (73 aa)). The interval 1100–1238 (NDGWFRKFND…TPGSGKSLTT (139 aa)) is oligomerization. The tract at residues 1121–1125 (ANKIS) is RNA-binding. Residues 1204 to 1360 (KNKITNYMQF…STYTKNGKLN (157 aa)) enclose the SF3 helicase domain. Residues C1368, C1371, C1380, and C1385 each coordinate Zn(2+). The C4-type zinc-finger motif lies at 1368–1385 (CKDCHQPSNFKKCCPLVC). Positions 1412 to 1419 (DYKNKVKI) are RNA-binding. Residues 1423-1428 (LEVLFQ) form an oligomerization region. The stretch at 1491 to 1506 (TILMFVSTLGIVYVIY) is an intramembrane region. Over 1507–2178 (KLFAQTQGPY…VLRRRWLDLF (672 aa)) the chain is Cytoplasmic. Residue Y1516 is modified to O-(5'-phospho-RNA)-tyrosine. Residues 1537 to 1714 (GPNTEFALSL…FSAQLKKQYF (178 aa)) form the Peptidase C3 domain. Active-site for protease 3C activity residues include H1576, E1607, and C1682. The 114-residue stretch at 1946-2059 (HLMAFDYSNF…SYPFELDSNI (114 aa)) folds into the RdRp catalytic domain. Residues D1951 and D2045 each contribute to the Mg(2+) site.

It belongs to the picornaviruses polyprotein family. Interacts with capsid protein VP1 and capsid protein VP3 to form heterotrimeric protomers. As to quaternary structure, interacts with capsid protein VP0, and capsid protein VP3 to form heterotrimeric protomers. Five protomers subsequently associate to form pentamers which serve as building blocks for the capsid. Interacts with capsid protein VP2, capsid protein VP3 and capsid protein VP4 following cleavage of capsid protein VP0. In terms of assembly, interacts with capsid protein VP1 and capsid protein VP3 in the mature capsid. Interacts with capsid protein VP0 and capsid protein VP1 to form heterotrimeric protomers. Five protomers subsequently associate to form pentamers which serve as building blocks for the capsid. Interacts with capsid protein VP4 in the mature capsid. Interacts with protein 2C; this interaction may be important for virion morphogenesis. As to quaternary structure, interacts with capsid protein VP1 and capsid protein VP3. In terms of assembly, homodimer. Homohexamer; forms a hexameric ring structure with 6-fold symmetry characteristic of AAA+ ATPases. Interacts (via N-terminus) with host RTN3 (via reticulon domain); this interaction is important for viral replication. Interacts with capsid protein VP3; this interaction may be important for virion morphogenesis. As to quaternary structure, interacts with protein 3CD. In terms of assembly, homodimer. Interacts with host GBF1. Interacts (via GOLD domain) with host ACBD3 (via GOLD domain); this interaction allows the formation of a viral protein 3A/ACBD3 heterotetramer with a 2:2 stoichiometry, which will stimulate the recruitment of host PI4KB in order to synthesize PI4P at the viral RNA replication sites. Interacts with RNA-directed RNA polymerase. As to quaternary structure, interacts with protein 3AB and with RNA-directed RNA polymerase. In terms of assembly, interacts with Viral protein genome-linked and with protein 3CD. The cofactor is Mg(2+). Specific enzymatic cleavages in vivo by the viral proteases yield processing intermediates and the mature proteins. Post-translationally, myristoylation is required for the formation of pentamers during virus assembly. Further assembly of 12 pentamers and a molecule of genomic RNA generates the provirion. In terms of processing, during virion maturation, immature virions are rendered infectious following cleavage of VP0 into VP4 and VP2. This maturation seems to be an autocatalytic event triggered by the presence of RNA in the capsid and it is followed by a conformational change infectious virion. Myristoylation is required during RNA encapsidation and formation of the mature virus particle. Post-translationally, VPg is uridylylated by the polymerase into VPg-pUpU. This acts as a nucleotide-peptide primer for the genomic RNA replication.

It is found in the virion. Its subcellular location is the host cytoplasm. The protein localises to the host cytoplasmic vesicle membrane. The protein resides in the host nucleus. The enzyme catalyses a ribonucleoside 5'-triphosphate + H2O = a ribonucleoside 5'-diphosphate + phosphate + H(+). It catalyses the reaction Selective cleavage of Tyr-|-Gly bond in the picornavirus polyprotein.. The catalysed reaction is RNA(n) + a ribonucleoside 5'-triphosphate = RNA(n+1) + diphosphate. It carries out the reaction Selective cleavage of Gln-|-Gly bond in the poliovirus polyprotein. In other picornavirus reactions Glu may be substituted for Gln, and Ser or Thr for Gly.. Its activity is regulated as follows. Replication or transcription is subject to high level of random mutations by the nucleotide analog ribavirin. Its function is as follows. Forms an icosahedral capsid of pseudo T=3 symmetry with capsid proteins VP2 and VP3. The capsid is 300 Angstroms in diameter, composed of 60 copies of each capsid protein and enclosing the viral positive strand RNA genome. Capsid protein VP1 mainly forms the vertices of the capsid. Capsid protein VP1 interacts with host cell receptor to provide virion attachment to target host cells. This attachment induces virion internalization. Tyrosine kinases are probably involved in the entry process. After binding to its receptor, the capsid undergoes conformational changes. Capsid protein VP1 N-terminus (that contains an amphipathic alpha-helix) and capsid protein VP4 are externalized. Together, they shape a pore in the host membrane through which viral genome is translocated to host cell cytoplasm. Forms an icosahedral capsid of pseudo T=3 symmetry with capsid proteins VP2 and VP3. The capsid is 300 Angstroms in diameter, composed of 60 copies of each capsid protein and enclosing the viral positive strand RNA genome. In terms of biological role, lies on the inner surface of the capsid shell. After binding to the host receptor, the capsid undergoes conformational changes. Capsid protein VP4 is released, Capsid protein VP1 N-terminus is externalized, and together, they shape a pore in the host membrane through which the viral genome is translocated into the host cell cytoplasm. Functionally, component of immature procapsids, which is cleaved into capsid proteins VP4 and VP2 after maturation. Allows the capsid to remain inactive before the maturation step. Its function is as follows. Cysteine protease that cleaves viral polyprotein and specific host proteins. It is responsible for the autocatalytic cleavage between the P1 and P2 regions, which is the first cleavage occurring in the polyprotein. Also cleaves the host translation initiation factor EIF4G1, in order to shut down the capped cellular mRNA translation. Inhibits the host nucleus-cytoplasm protein and RNA trafficking by cleaving host members of the nuclear pores. Counteracts stress granule formation probably by antagonizing its assembly or promoting its dissassembly. Plays an essential role in the virus replication cycle by acting as a viroporin. Creates a pore in the host endoplasmic reticulum and as a consequence releases Ca2+ in the cytoplasm of infected cell. In turn, high levels of cytoplasmic calcium may trigger membrane trafficking and transport of viral ER-associated proteins to viroplasms, sites of viral genome replication. In terms of biological role, induces and associates with structural rearrangements of intracellular membranes. Displays RNA-binding, nucleotide binding and NTPase activities. May play a role in virion morphogenesis and viral RNA encapsidation by interacting with the capsid protein VP3. Functionally, localizes the viral replication complex to the surface of membranous vesicles. Together with protein 3CD binds the Cis-Active RNA Element (CRE) which is involved in RNA synthesis initiation. Acts as a cofactor to stimulate the activity of 3D polymerase, maybe through a nucleid acid chaperone activity. Its function is as follows. Localizes the viral replication complex to the surface of membranous vesicles. It inhibits host cell endoplasmic reticulum-to-Golgi apparatus transport and causes the disassembly of the Golgi complex, possibly through GBF1 interaction. This would result in depletion of MHC, trail receptors and IFN receptors at the host cell surface. Plays an essential role in viral RNA replication by recruiting ACBD3 and PI4KB at the viral replication sites, thereby allowing the formation of the rearranged membranous structures where viral replication takes place. Acts as a primer for viral RNA replication and remains covalently bound to viral genomic RNA. VPg is uridylylated prior to priming replication into VPg-pUpU. The oriI viral genomic sequence may act as a template for this. The VPg-pUpU is then used as primer on the genomic RNA poly(A) by the RNA-dependent RNA polymerase to replicate the viral genome. During genome replication, the VPg-RNA linkage is removed by the host TDP2, thereby accelerating replication. During the late stage of the replication cycle, host TDP2 is excluded from sites of viral RNA synthesis and encapsidation, allowing for the generation of progeny virions. In terms of biological role, involved in the viral replication complex and viral polypeptide maturation. It exhibits protease activity with a specificity and catalytic efficiency that is different from protease 3C. Protein 3CD lacks polymerase activity. Protein 3CD binds to the 5'UTR of the viral genome. Functionally, replicates the viral genomic RNA on the surface of intracellular membranes. May form linear arrays of subunits that propagate along a strong head-to-tail interaction called interface-I. Covalently attaches UMP to a tyrosine of VPg, which is used to prime RNA synthesis. The positive stranded RNA genome is first replicated at virus induced membranous vesicles, creating a dsRNA genomic replication form. This dsRNA is then used as template to synthesize positive stranded RNA genomes. ss(+)RNA genomes are either translated, replicated or encapsidated. Its function is as follows. Major viral protease that mediates proteolytic processing of the polyprotein. Cleaves host EIF5B, contributing to host translation shutoff. Also cleaves host PABPC1, contributing to host translation shutoff. Cleaves host NLRP1, triggers host N-glycine-mediated degradation of the autoinhibitory NLRP1 N-terminal fragment. The polypeptide is Genome polyprotein (Homo sapiens (Human)).